The following is a 177-amino-acid chain: Small ribosomal subunit protein uS5 (177 aa).

The S5 DRBM domain maps to 19–82 (FIEKLVAIKR…DQAQKQMIKV (64 aa)).

Belongs to the universal ribosomal protein uS5 family. As to quaternary structure, part of the 30S ribosomal subunit. Contacts proteins S4 and S8.

With S4 and S12 plays an important role in translational accuracy. In terms of biological role, located at the back of the 30S subunit body where it stabilizes the conformation of the head with respect to the body. The chain is Small ribosomal subunit protein uS5 from Magnetococcus marinus (strain ATCC BAA-1437 / JCM 17883 / MC-1).